A 348-amino-acid chain; its full sequence is L-threonine 3-dehydrogenase (348 aa).

Position 42 (cysteine 42) interacts with Zn(2+). Active-site charge relay system residues include threonine 44 and histidine 47. Residues histidine 67, glutamate 68, cysteine 97, cysteine 100, cysteine 103, and cysteine 111 each contribute to the Zn(2+) site. NAD(+) contacts are provided by residues leucine 179, glutamate 199, arginine 204, 266–268 (LGL), and 291–292 (IT).

The protein belongs to the zinc-containing alcohol dehydrogenase family. As to quaternary structure, homotetramer. Zn(2+) is required as a cofactor.

It localises to the cytoplasm. It carries out the reaction L-threonine + NAD(+) = (2S)-2-amino-3-oxobutanoate + NADH + H(+). It functions in the pathway amino-acid degradation; L-threonine degradation via oxydo-reductase pathway; glycine from L-threonine: step 1/2. Functionally, catalyzes the NAD(+)-dependent oxidation of L-threonine to 2-amino-3-ketobutyrate. To a lesser extent, also catalyzes the oxidation of L-serine, D-threonine, butan-2,3-diol, butan-1,2-diol, and propan-1,2-diol and cannot oxidize other L-amino acids. Cannot utilize NADP(H) instead of NAD(H). The protein is L-threonine 3-dehydrogenase of Pyrococcus furiosus (strain ATCC 43587 / DSM 3638 / JCM 8422 / Vc1).